The following is a 129-amino-acid chain: Small ribosomal subunit protein uS11 (129 aa).

This sequence belongs to the universal ribosomal protein uS11 family. Part of the 30S ribosomal subunit. Interacts with proteins S7 and S18. Binds to IF-3.

Located on the platform of the 30S subunit, it bridges several disparate RNA helices of the 16S rRNA. Forms part of the Shine-Dalgarno cleft in the 70S ribosome. The polypeptide is Small ribosomal subunit protein uS11 (Phocaeicola vulgatus (strain ATCC 8482 / DSM 1447 / JCM 5826 / CCUG 4940 / NBRC 14291 / NCTC 11154) (Bacteroides vulgatus)).